A 201-amino-acid chain; its full sequence is Recombination protein RecR (201 aa).

The C4-type zinc-finger motif lies at Cys57–Cys72. Residues Gly81–Pro176 form the Toprim domain.

Belongs to the RecR family.

In terms of biological role, may play a role in DNA repair. It seems to be involved in an RecBC-independent recombinational process of DNA repair. It may act with RecF and RecO. The sequence is that of Recombination protein RecR from Shigella boydii serotype 18 (strain CDC 3083-94 / BS512).